A 337-amino-acid polypeptide reads, in one-letter code: Ycf66-like protein (337 aa).

The disordered stretch occupies residues 111–337; sequence TEAELDQLEP…GADDQERFDY (227 aa). The segment covering 113–123 has biased composition (acidic residues); that stretch reads AELDQLEPEDE. 2 stretches are compositionally biased toward basic and acidic residues: residues 133 to 143 and 253 to 269; these read RGYDDDARSGR and FGDR…RPYE. Residues 304 to 316 are compositionally biased toward polar residues; that stretch reads QSRSGNPRSQRPS.

It belongs to the ycf66 family.

The protein is Ycf66-like protein of Synechocystis sp. (strain ATCC 27184 / PCC 6803 / Kazusa).